A 233-amino-acid polypeptide reads, in one-letter code: Probable septum site-determining protein MinC (233 aa).

The protein belongs to the MinC family. Interacts with MinD and FtsZ.

In terms of biological role, cell division inhibitor that blocks the formation of polar Z ring septums. Rapidly oscillates between the poles of the cell to destabilize FtsZ filaments that have formed before they mature into polar Z rings. Prevents FtsZ polymerization. This Proteus mirabilis (strain HI4320) protein is Probable septum site-determining protein MinC.